Reading from the N-terminus, the 448-residue chain is Deoxyguanosinetriphosphate triphosphohydrolase-like protein (448 aa).

The disordered stretch occupies residues 1–26 (MQINSSWQERFLADPPREKDHRPPFR). The segment covering 11–26 (FLADPPREKDHRPPFR) has biased composition (basic and acidic residues). Residues 59–272 (RLTHSLEVAQ…MELADDIAYA (214 aa)) enclose the HD domain.

Belongs to the dGTPase family. Type 2 subfamily.

The sequence is that of Deoxyguanosinetriphosphate triphosphohydrolase-like protein from Histophilus somni (strain 129Pt) (Haemophilus somnus).